Here is a 652-residue protein sequence, read N- to C-terminus: MNKRMNELVALLNRYATEYYTSDNPSVADSEYDRLYRELVELETAYPEQVLADSPTHRVGGKVLDGFEKYSHQYPLYSLQDAFSREELDAFDARVRKEVAHPTYICELKIDGLSISLTYEKGILVAGVTRGDGSIGENITENLKRVKDIPLTLPEELDITVRGECYMPRASFDQVNQVRQENGEPEFANPRNAAAGTLRQLDTAVVAKRNLATFLYQEASPSTRDSQEKGLKYLEQLGFVVNPKRILAENIDEIWNFIQEVGQERENLPYDIDGVVIKVNDLASQEELGFTVKAPKWAVAYKFPAEEKEAQLLSVDWTVGRTGVVTPTANLTPVQLAGTTVSRATLHNVDYIAEKDIRKDDTVIVYKAGDIIPAVLRVVESKRVSEEKLDIPTNCPSCNSDLLHFEDEVALRCINPRCPAQIMEGLIHFASRDAMNITGLGPSIVEKLFAANLVKDVADIYRLQEEDFLLLEGVKEKSAAKLYQAIQASKENSAEKLLFGLGIRHVGSKVSQLLLQYFHSIENLSQADSEEVASIESLGGVIAKSLQTYFATEGSEILLRELKETGVNLDYKGQTVVADAALSGLTVVLTGKLERLKRSEAKSKLESLGAKVTGSISKKTDLVVVGADAGSKLQKAQELGIQVRDEAWLESL.

Residues 29–33 (DSEYD), 78–79 (SL), and E107 each bind NAD(+). K109 (N6-AMP-lysine intermediate) is an active-site residue. Positions 130, 164, 278, and 302 each coordinate NAD(+). C395, C398, C413, and C418 together coordinate Zn(2+). The BRCT domain maps to 577-652 (VADAALSGLT…VRDEAWLESL (76 aa)).

The protein belongs to the NAD-dependent DNA ligase family. LigA subfamily. Mg(2+) serves as cofactor. The cofactor is Mn(2+).

The catalysed reaction is NAD(+) + (deoxyribonucleotide)n-3'-hydroxyl + 5'-phospho-(deoxyribonucleotide)m = (deoxyribonucleotide)n+m + AMP + beta-nicotinamide D-nucleotide.. In terms of biological role, DNA ligase that catalyzes the formation of phosphodiester linkages between 5'-phosphoryl and 3'-hydroxyl groups in double-stranded DNA using NAD as a coenzyme and as the energy source for the reaction. It is essential for DNA replication and repair of damaged DNA. This chain is DNA ligase, found in Streptococcus pneumoniae (strain JJA).